Here is a 201-residue protein sequence, read N- to C-terminus: UPF0301 protein MAP_0045 (201 aa).

This sequence belongs to the UPF0301 (AlgH) family.

The polypeptide is UPF0301 protein MAP_0045 (Mycolicibacterium paratuberculosis (strain ATCC BAA-968 / K-10) (Mycobacterium paratuberculosis)).